Reading from the N-terminus, the 148-residue chain is Ferredoxin-thioredoxin reductase catalytic chain, chloroplastic (148 aa).

The transit peptide at 1–35 (MKALQASTSYSFFSKSSSATLQRRTHRPQCVILSK) directs the protein to the chloroplast. Cys87 provides a ligand contact to [4Fe-4S] cluster. Cys89 acts as the Nucleophile in catalysis. An intrachain disulfide couples Cys89 to Cys119. Residues Cys106, Cys108, and Cys117 each coordinate [4Fe-4S] cluster.

Belongs to the ferredoxin thioredoxin reductase beta subunit family. In terms of assembly, heterodimer of subunit A (variable subunit) and subunit B (catalytic subunit). Heterodimeric FTR forms a complex with ferredoxin and thioredoxin. The cofactor is [4Fe-4S] cluster.

It is found in the plastid. Its subcellular location is the chloroplast. It carries out the reaction [thioredoxin]-disulfide + 2 reduced [2Fe-2S]-[ferredoxin] + 2 H(+) = [thioredoxin]-dithiol + 2 oxidized [2Fe-2S]-[ferredoxin]. Functionally, catalytic subunit of the ferredoxin-thioredoxin reductase (FTR), which catalyzes the two-electron reduction of thioredoxins by the electrons provided by reduced ferredoxin. In Spinacia oleracea (Spinach), this protein is Ferredoxin-thioredoxin reductase catalytic chain, chloroplastic.